The primary structure comprises 556 residues: Urocanate hydratase (556 aa).

NAD(+)-binding positions include 52 to 53, glutamine 130, 176 to 178, glutamate 196, arginine 201, 243 to 244, 264 to 268, 274 to 275, and tyrosine 323; these read GG, GMG, NA, QTSAH, and YL. Residue cysteine 411 is part of the active site. Glycine 493 serves as a coordination point for NAD(+).

It belongs to the urocanase family. The cofactor is NAD(+).

It is found in the cytoplasm. It catalyses the reaction 4-imidazolone-5-propanoate = trans-urocanate + H2O. The protein operates within amino-acid degradation; L-histidine degradation into L-glutamate; N-formimidoyl-L-glutamate from L-histidine: step 2/3. Functionally, catalyzes the conversion of urocanate to 4-imidazolone-5-propionate. This Rhodospirillum rubrum (strain ATCC 11170 / ATH 1.1.1 / DSM 467 / LMG 4362 / NCIMB 8255 / S1) protein is Urocanate hydratase.